Reading from the N-terminus, the 236-residue chain is CD81 antigen (236 aa).

Residues 1–12 (MGVEGCTKCIKY) are Cytoplasmic-facing. The chain crosses the membrane as a helical span at residues 13–33 (LLFVFNFVFWLAGGVILGVAL). Residues 34 to 63 (WLRHDPQTTNLLYLELGDRPAPNTFYVGIY) lie on the Extracellular side of the membrane. Residues 64-84 (ILIAVGAVMMFVGFLGCYGAI) traverse the membrane as a helical segment. The Cytoplasmic portion of the chain corresponds to 85–89 (QESQC). The chain crosses the membrane as a helical span at residues 90-112 (LLGTFFTCLVILFACEVAAGIWG). Over 113–201 (FVNKDQIAKD…GKIDELFSGK (89 aa)) the chain is Extracellular. Intrachain disulfides connect Cys-156-Cys-190 and Cys-157-Cys-175. Residues 202 to 224 (LYLIGIAAIVVAVIMIFEMILSM) form a helical membrane-spanning segment. Glu-219 contributes to the cholesterol binding site. At 225–236 (VLCCGIRNSSVY) the chain is on the cytoplasmic side.

The protein belongs to the tetraspanin (TM4SF) family. Homodimer. Part of a complex composed of CD19, CR2/CD21, CD81 and IFITM1/CD225 in the membrane of mature B cells. Interacts (via the second extracellular domain) with CD19; this interaction is initiated early during biosynthesis in the ER and enables trafficking of only properly folded CD19. Part of a complex that includes MHC class II/HLA-DR molecules and IFITM1. Interacts with IFITM1. Interacts with IFITM2 and IFITM3. Part of integrin-tetraspanin complex composed of CD9, CD81, beta-1 and beta-2 integrins in the membrane of monocyte/macrophages. Interacts (via the second extracellular domain) with integrin ITGAV:ITGB3. Interacts with CD247/CD3 zeta, ICAM1 and CD9 at the immune synapse on T cell membrane. Part of a GPCR-tetraspanin complex consisting at least of ADGRG1, CD81, possibly CD9, and GNA11 in which CD81 enhances the association of ADGRG1 with GNA11. Part of a complex composed of CD9, CD81, PTGFRN and IGSF8. Interacts directly with IGSF8. Interacts with CD53 and SCIMP. Interacts with SAMHD1 (via its C-terminus). Interacts with glypican GPC3 and with the transcriptional repressor HHEX; binding to GPC3 decreases the availability of free CD81 for binding to HHEX, resulting in nuclear translocation of HHEX and transcriptional repression. Interacts with CLDN1. Interacts with CLDN6 and CLDN9. Not glycosylated. In terms of processing, likely constitutively palmitoylated at low levels. Protein palmitoylation is up-regulated upon coligation of BCR and CD9-C2R-CD81 complexes in lipid rafts.

The protein resides in the cell membrane. It is found in the basolateral cell membrane. In terms of biological role, structural component of specialized membrane microdomains known as tetraspanin-enriched microdomains (TERMs), which act as platforms for receptor clustering and signaling. Essential for trafficking and compartmentalization of CD19 receptor on the surface of activated B cells. Upon initial encounter with microbial pathogens, enables the assembly of CD19-CR2/CD21 and B cell receptor (BCR) complexes at signaling TERMs, lowering the threshold dose of antigen required to trigger B cell clonal expansion and antibody production. In T cells, facilitates the localization of CD247/CD3 zeta at antigen-induced synapses with B cells, providing for costimulation and polarization toward T helper type 2 phenotype. Present in MHC class II compartments, may also play a role in antigen presentation. Can act both as positive and negative regulator of homotypic or heterotypic cell-cell fusion processes. Positively regulates sperm-egg fusion and may be involved in acrosome reaction. In myoblasts, associates with CD9 and PTGFRN and inhibits myotube fusion during muscle regeneration. In macrophages, associates with CD9 and beta-1 and beta-2 integrins, and prevents macrophage fusion into multinucleated giant cells specialized in ingesting complement-opsonized large particles. Also prevents the fusion of mononuclear cell progenitors into osteoclasts in charge of bone resorption. May regulate the compartmentalization of enzymatic activities. In T cells, defines the subcellular localization of dNTPase SAMHD1 and permits its degradation by the proteasome, thereby controlling intracellular dNTP levels. Also involved in cell adhesion and motility. Positively regulates integrin-mediated adhesion of macrophages, particularly relevant for the inflammatory response in the lung. The polypeptide is CD81 antigen (CD81) (Bos taurus (Bovine)).